Consider the following 490-residue polypeptide: Transmembrane protease serine 2 (490 aa).

At 1 to 83 the chain is on the cytoplasmic side; it reads MALNSGSPPG…ALCTSKSKKS (83 aa). Residues 84 to 104 form a helical; Signal-anchor for type II membrane protein membrane-spanning segment; it reads LCLALALGTVLTGAAVAAVLL. The Extracellular portion of the chain corresponds to 105-490; the sequence is WRFWDSNCST…WIYQQMRANS (386 aa). The N-linked (GlcNAc...) asparagine glycan is linked to Asn111. The 39-residue stretch at 111–149 folds into the LDL-receptor class A domain; the sequence is NCSTSEMECGSSGTCISSSLWCDGVAHCPNGEDENRCVR. 9 cysteine pairs are disulfide-bonded: Cys112–Cys125, Cys119–Cys138, Cys132–Cys147, Cys171–Cys230, Cys184–Cys240, Cys243–Cys363, Cys279–Cys295, Cys408–Cys424, and Cys435–Cys463. Positions 133, 135, 143, and 144 each coordinate Ca(2+). One can recognise an SRCR domain in the interval 150 to 242; the sequence is LYGQSFILQV…RMVVSLRCIE (93 aa). A glycan (N-linked (GlcNAc...) asparagine) is linked at Asn212. Residues 254 to 487 enclose the Peptidase S1 domain; the sequence is IVGGLNASPG…FTDWIYQQMR (234 aa). Active-site charge relay system residues include His294 and Asp343. Ser439 acts as the Charge relay system in catalysis. Asn474 carries N-linked (GlcNAc...) asparagine glycosylation.

The protein belongs to the peptidase S1 family. The catalytically active form interacts with ACE2. Proteolytically processed; by an autocatalytic mechanism. Autocleavage induces active conformation. In terms of tissue distribution, larynx, trachea and bronchi, lung, prostate and kidney.

The protein localises to the cell membrane. Its subcellular location is the secreted. It catalyses the reaction The enzyme cleaves angiotensin-converting enzyme 2 (EC 3.4.17.23) and cleaves influenzea A and B virus and coronavirus spike glycoproteins at arginine residues.. Its function is as follows. Plasma membrane-anchored serine protease that cleaves at arginine residues. Participates in proteolytic cascades of relevance for the normal physiologic function of the prostate. Androgen-induced TMPRSS2 activates several substrates that include pro-hepatocyte growth factor/HGF, the protease activated receptor-2/F2RL1 or matriptase/ST14 leading to extracellular matrix disruption. In addition, activates trigeminal neurons and contribute to both spontaneous pain and mechanical allodynia. Functionally, (Microbial infection) Essential for spread and pathogenesis of influenza A virus (strains H1N1, H3N2 and H7N9) and is involved in proteolytic cleavage and activation of hemagglutinin (HA) protein which is essential for viral infectivity. The sequence is that of Transmembrane protease serine 2 (Tmprss2) from Mus musculus (Mouse).